Here is a 184-residue protein sequence, read N- to C-terminus: Jacalin-related lectin 2 (184 aa).

Positions 4–163 (KIKIGPVGTD…LQNIGVYLQP (160 aa)) constitute a Jacalin-type lectin domain.

It belongs to the jacalin lectin family.

This is Jacalin-related lectin 2 (JAL2) from Arabidopsis thaliana (Mouse-ear cress).